The sequence spans 91 residues: Large ribosomal subunit protein bL27 (91 aa).

The interval M1–F26 is disordered.

It belongs to the bacterial ribosomal protein bL27 family.

The sequence is that of Large ribosomal subunit protein bL27 from Chloroflexus aurantiacus (strain ATCC 29366 / DSM 635 / J-10-fl).